The following is a 497-amino-acid chain: Cytochrome P450 2D6 (497 aa).

Asp-301 is a substrate binding site. Cys-443 is a binding site for heme.

It belongs to the cytochrome P450 family. Requires heme as cofactor.

It localises to the endoplasmic reticulum membrane. It is found in the microsome membrane. The enzyme catalyses (5Z,8Z,11Z,14Z)-eicosatetraenoate + reduced [NADPH--hemoprotein reductase] + O2 = (8R,9S)-epoxy-(5Z,11Z,14Z)-eicosatrienoate + oxidized [NADPH--hemoprotein reductase] + H2O + H(+). The catalysed reaction is (5Z,8Z,11Z,14Z)-eicosatetraenoate + reduced [NADPH--hemoprotein reductase] + O2 = (11R,12S)-epoxy-(5Z,8Z,14Z)-eicosatrienoate + oxidized [NADPH--hemoprotein reductase] + H2O + H(+). It catalyses the reaction (5Z,8Z,11Z,14Z)-eicosatetraenoate + reduced [NADPH--hemoprotein reductase] + O2 = (14S,15R)-epoxy-(5Z,8Z,11Z)-eicosatrienoate + oxidized [NADPH--hemoprotein reductase] + H2O + H(+). It carries out the reaction N-(5Z,8Z,11Z,14Z-eicosatetraenoyl)-ethanolamine + reduced [NADPH--hemoprotein reductase] + O2 = N-(8,9-epoxy-5Z,11Z,14Z-eicosatrienoyl)-ethanolamine + oxidized [NADPH--hemoprotein reductase] + H2O + H(+). The enzyme catalyses N-(5Z,8Z,11Z,14Z-eicosatetraenoyl)-ethanolamine + reduced [NADPH--hemoprotein reductase] + O2 = N-(11,12-epoxy-5Z,8Z,14Z-eicosatrienoyl)-ethanolamine + oxidized [NADPH--hemoprotein reductase] + H2O + H(+). The catalysed reaction is N-(5Z,8Z,11Z,14Z-eicosatetraenoyl)-ethanolamine + reduced [NADPH--hemoprotein reductase] + O2 = N-(14,15-epoxy-5Z,8Z,11Z-eicosatrienoyl)-ethanolamine + oxidized [NADPH--hemoprotein reductase] + H2O + H(+). It catalyses the reaction N-(5Z,8Z,11Z,14Z-eicosatetraenoyl)-ethanolamine + reduced [NADPH--hemoprotein reductase] + O2 = N-(20-hydroxy-5Z,8Z,11Z,14Z-eicosatetraenoyl)-ethanolamine + oxidized [NADPH--hemoprotein reductase] + H2O + H(+). It carries out the reaction (5Z,8Z,11Z,14Z,17Z)-eicosapentaenoate + reduced [NADPH--hemoprotein reductase] + O2 = (17S,18R)-epoxy-(5Z,8Z,11Z,14Z)-eicosatetraenoate + oxidized [NADPH--hemoprotein reductase] + H2O + H(+). The enzyme catalyses (4Z,7Z,10Z,13Z,16Z,19Z)-docosahexaenoate + reduced [NADPH--hemoprotein reductase] + O2 = (19R,20S)-epoxy-(4Z,7Z,10Z,13Z,16Z)-docosapentaenoate + oxidized [NADPH--hemoprotein reductase] + H2O + H(+). The catalysed reaction is (4Z,7Z,10Z,13Z,16Z,19Z)-docosahexaenoate + reduced [NADPH--hemoprotein reductase] + O2 = (19S,20R)-epoxy-(4Z,7Z,10Z,13Z,16Z)-docosapentaenoate + oxidized [NADPH--hemoprotein reductase] + H2O + H(+). It catalyses the reaction cholesterol + reduced [NADPH--hemoprotein reductase] + O2 = 25-hydroxycholesterol + oxidized [NADPH--hemoprotein reductase] + H2O + H(+). It carries out the reaction all-trans-retinol + reduced [NADPH--hemoprotein reductase] + O2 = all-trans-retinal + oxidized [NADPH--hemoprotein reductase] + 2 H2O + H(+). The protein operates within cofactor metabolism; retinol metabolism. Its pathway is lipid metabolism; fatty acid metabolism. It participates in steroid metabolism; cholesterol metabolism. Functionally, a cytochrome P450 monooxygenase involved in the metabolism of fatty acids, steroids and retinoids. Mechanistically, uses molecular oxygen inserting one oxygen atom into a substrate, and reducing the second into a water molecule, with two electrons provided by NADPH via cytochrome P450 reductase (NADPH--hemoprotein reductase). Catalyzes the epoxidation of double bonds of polyunsaturated fatty acids (PUFA). Metabolizes endocannabinoid arachidonoylethanolamide (anandamide) to 20-hydroxyeicosatetraenoic acid ethanolamide (20-HETE-EA) and 8,9-, 11,12-, and 14,15-epoxyeicosatrienoic acid ethanolamides (EpETrE-EAs), potentially modulating endocannabinoid system signaling. Catalyzes the hydroxylation of carbon-hydrogen bonds. Metabolizes cholesterol toward 25-hydroxycholesterol, a physiological regulator of cellular cholesterol homeostasis. Catalyzes the oxidative transformations of all-trans retinol to all-trans retinal, a precursor for the active form all-trans-retinoic acid. Also involved in the oxidative metabolism of drugs such as antiarrhythmics, adrenoceptor antagonists, and tricyclic antidepressants. In Pan paniscus (Pygmy chimpanzee), this protein is Cytochrome P450 2D6 (CYP2D6).